The following is a 334-amino-acid chain: TPR repeat-containing protein MJ0798 (334 aa).

7 TPR repeats span residues 102 to 135 (WKLW…NQNT), 137 to 168 (LLCK…DRNN), 169 to 202 (YKAL…NPND), 204 to 235 (EALE…KPDD), 236 to 269 (IDLI…NPNV), 273 to 306 (EQIY…NLYH), and 308 to 333 (EIYE…YKKL).

This is TPR repeat-containing protein MJ0798 from Methanocaldococcus jannaschii (strain ATCC 43067 / DSM 2661 / JAL-1 / JCM 10045 / NBRC 100440) (Methanococcus jannaschii).